The primary structure comprises 502 residues: MNVFFTFSLLFLAALGSCADDRNPLEECFRETDYEEFLEIAKNGLSTTSNPKRVVIVGAGMSGLSAAYVLANAGHQVTVLEASERAGGRVKTYRNEKEGWYANLGPMRLPEKHRIVREYIRKFDLQLNEFSQENENAWYFIKNIRKRVGEVNKDPGVLEYPVKPSEVGKSAGQLYEESLQKAVEELRRTNCSYMLNKYDTYSTKEYLLKEGNLSPGAVDMIGDLLNEDSGYYVSFIESLKHDDIFAYEKRFDEIVGGMDKLPTSMYQAIQEKVHLNARVIKIQQDVKEVTVTYQTSEKETLSVTADYVIVCTTSRAARRIKFEPPLPPKKAHALRSVHYRSGTKIFLTCTKKFWEDDGIHGGKSTTDLPSRFIYYPNHNFPNGVGVIIAYGIGDDANYFQALDFEDCGDIVINDLSLIHQLPKEEIQAICRPSMIQRWSLDKYAMGGITTFTPYQFQHFSEALTAPVDRIYFAGEYTAQAHGWIDSTIKSGLRAARDVNSAS.

Residues 1-18 (MNVFFTFSLLFLAALGSC) form the signal peptide. C28 and C191 are joined by a disulfide. FAD-binding positions include 61–62 (MS), 81–82 (EA), R89, and 105–108 (GPMR). R108 serves as a coordination point for substrate. The N-linked (GlcNAc...) asparagine glycan is linked to N190. H241 is a binding site for substrate. V279 is a binding site for FAD. A disulfide bridge connects residues C349 and C430. Position 390 (Y390) interacts with substrate. FAD-binding positions include E475 and 482 to 487 (GWIDST). 482–483 (GW) provides a ligand contact to substrate.

This sequence belongs to the flavin monoamine oxidase family. FIG1 subfamily. Homodimer; non-covalently linked. It depends on FAD as a cofactor. In terms of processing, N-glycosylated. The enzymatic activity is not affected by deglycosylation. As to expression, expressed by the venom gland.

The protein localises to the secreted. The catalysed reaction is an L-alpha-amino acid + O2 + H2O = a 2-oxocarboxylate + H2O2 + NH4(+). It carries out the reaction L-leucine + O2 + H2O = 4-methyl-2-oxopentanoate + H2O2 + NH4(+). It catalyses the reaction L-phenylalanine + O2 + H2O = 3-phenylpyruvate + H2O2 + NH4(+). The enzyme catalyses L-tryptophan + O2 + H2O = indole-3-pyruvate + H2O2 + NH4(+). The catalysed reaction is L-methionine + O2 + H2O = 4-methylsulfanyl-2-oxobutanoate + H2O2 + NH4(+). It carries out the reaction L-isoleucine + O2 + H2O = (S)-3-methyl-2-oxopentanoate + H2O2 + NH4(+). It catalyses the reaction L-histidine + O2 + H2O = 3-(imidazol-5-yl)pyruvate + H2O2 + NH4(+). The enzyme catalyses L-tyrosine + O2 + H2O = 3-(4-hydroxyphenyl)pyruvate + H2O2 + NH4(+). The catalysed reaction is L-alanine + O2 + H2O = pyruvate + H2O2 + NH4(+). It carries out the reaction L-valine + O2 + H2O = 3-methyl-2-oxobutanoate + H2O2 + NH4(+). With respect to regulation, its enzymatic activities is reduced when it is exposed to Ca(2+), Zn(2+), Al(3+), Cu(2+) or Ni(2+) salts. Functionally, catalyzes an oxidative deamination of predominantly hydrophobic and aromatic L-amino acids, thus producing hydrogen peroxide that may contribute to the toxicity of the venom. Shows very high activity on L-Met, and L-Leu, high activity on L-Ile, L-Phe and L-Tyr and moderate activity on L-His, L-Val and L-Ala. Exhibits diverse biological activities, such as edema, apoptosis of tumor cell lines, antibacterial activities against both Gram-positive and Gram-negative bacteria, as well as induction of platelet aggregation. Effects of snake L-amino oxidases on platelets are controversial, since they either induce aggregation or inhibit agonist-induced aggregation. These different effects are probably due to different experimental conditions. Unlike other snake venom L-amino acid oxidases, does not induce hemorrhage. It may also induce hemolysis. Has parasiticidal activities against and leishmania, as a result of enzyme-catalyzed hydrogen peroxide production. This is L-amino-acid oxidase BmooLAAO-I from Bothrops moojeni (Lance-headed viper).